We begin with the raw amino-acid sequence, 547 residues long: Apolipoprotein N-acyltransferase (547 aa).

6 helical membrane-spanning segments follow: residues 31–51 (PLPAWSLAPVQVIALAVAAHA), 65–85 (GWLFAMFSFSLGLYWLYVSMH), 89–109 (GLAAPLAAAGVLALSAFLALF), 144–164 (AACWAALEWLRAVVLTGFPWL), 181–201 (LLGVHGMALLAAFAAAALAGL), and 215–235 (LAAGVALLLAGAGWLLGQFSW). One can recognise a CN hydrolase domain in the interval 248–511 (VQGNVEQSQK…AGVLPVAVQG (264 aa)). Glu292 functions as the Proton acceptor in the catalytic mechanism. The active site involves Lys366. The Nucleophile role is filled by Cys416.

The protein belongs to the CN hydrolase family. Apolipoprotein N-acyltransferase subfamily.

The protein resides in the cell inner membrane. The catalysed reaction is N-terminal S-1,2-diacyl-sn-glyceryl-L-cysteinyl-[lipoprotein] + a glycerophospholipid = N-acyl-S-1,2-diacyl-sn-glyceryl-L-cysteinyl-[lipoprotein] + a 2-acyl-sn-glycero-3-phospholipid + H(+). Its pathway is protein modification; lipoprotein biosynthesis (N-acyl transfer). Functionally, catalyzes the phospholipid dependent N-acylation of the N-terminal cysteine of apolipoprotein, the last step in lipoprotein maturation. This Bordetella bronchiseptica (strain ATCC BAA-588 / NCTC 13252 / RB50) (Alcaligenes bronchisepticus) protein is Apolipoprotein N-acyltransferase.